The sequence spans 435 residues: Transforming growth factor beta-2 proprotein (435 aa).

The N-terminal stretch at methionine 1–serine 20 is a signal peptide. Asparagine 72, asparagine 140, and asparagine 241 each carry an N-linked (GlcNAc...) asparagine glycan. Disulfide bonds link cysteine 309–cysteine 318, cysteine 317–cysteine 380, cysteine 346–cysteine 411, and cysteine 350–cysteine 413.

This sequence belongs to the TGF-beta family. Interacts with the serine proteases, HTRA1 and HTRA3. Interacts with ASPN. Interacts with MFAP5. As to quaternary structure, interacts with Transforming growth factor beta-2 (TGF-beta-2) chain; interaction is non-covalent and maintains (TGF-beta-2) in a latent state. Interacts with LRRC32/GARP; leading to regulate activation of TGF-beta-2. Interacts with NREP; the interaction results in a decrease in TGFB2 autoinduction. In terms of assembly, transforming growth factor beta-2: Homodimer; disulfide-linked. Transforming growth factor beta-2: Interacts with TGF-beta receptors (TGFBR1 and TGFBR2), leading to signal transduction. The precursor proprotein is cleaved in the Golgi apparatus to form Transforming growth factor beta-2 (TGF-beta-2) and Latency-associated peptide (LAP) chains, which remain non-covalently linked, rendering TGF-beta-2 inactive.

The protein localises to the secreted. It localises to the extracellular space. It is found in the extracellular matrix. In terms of biological role, precursor of the Latency-associated peptide (LAP) and Transforming growth factor beta-2 (TGF-beta-2) chains, which constitute the regulatory and active subunit of TGF-beta-2, respectively. Functionally, required to maintain the Transforming growth factor beta-2 (TGF-beta-2) chain in a latent state during storage in extracellular matrix. Associates non-covalently with TGF-beta-2 and regulates its activation via interaction with 'milieu molecules', such as LTBP1 and LRRC32/GARP, that control activation of TGF-beta-2. Multifunctional protein that regulates various processes such as angiogenesis and heart development. Activation into mature form follows different steps: following cleavage of the proprotein in the Golgi apparatus, Latency-associated peptide (LAP) and Transforming growth factor beta-2 (TGF-beta-2) chains remain non-covalently linked rendering TGF-beta-2 inactive during storage in extracellular matrix. At the same time, LAP chain interacts with 'milieu molecules', such as LTBP1 and LRRC32/GARP, that control activation of TGF-beta-2 and maintain it in a latent state during storage in extracellular milieus. Once activated following release of LAP, TGF-beta-2 acts by binding to TGF-beta receptors (TGFBR1 and TGFBR2), which transduce signal. The polypeptide is Transforming growth factor beta-2 proprotein (TGFB2) (Sus scrofa (Pig)).